Consider the following 396-residue polypeptide: MAGSSLRQVAVFGATGSIGASALDVIARHPERLRASLLSAGSKVDELLALCATHRPAHAVIADAALYPALRDGLRALGLATQAHAGAEALDALASGDVCDTVVAAIVGAAGLPSTLAAARAGKRLLLANKESLVLAGELLTRTAAAAGAEIIPIDSEHSAIFQCLRSCDASRGVRRVILTASGGPFRGRDRAALAAVTPAQAVAHPKWSMGPKISVDSATMMNKGLEVIEAHHLFGLPGEQIDVLVHPQSLVHSLVEFVDGSTLAQLGLPDMRTTLAVGLAWPERVDSGVGGLDLLRQGRLDFEAPDTAAFPCLRLAWDALRAGGTAPAILNAANEVAVSAFLQGQVGFLAIPALVEHTLTTLPRHNADSLDTLLFADAQARQITERALAHHALHA.

The NADPH site is built by T15, G16, S17, I18, G41, and N129. K130 is a 1-deoxy-D-xylulose 5-phosphate binding site. E131 provides a ligand contact to NADPH. Residue D155 participates in Mn(2+) binding. 1-deoxy-D-xylulose 5-phosphate contacts are provided by S156, E157, S182, and H205. E157 is a binding site for Mn(2+). Position 211 (G211) interacts with NADPH. 1-deoxy-D-xylulose 5-phosphate contacts are provided by S218, N223, K224, and E227. A Mn(2+)-binding site is contributed by E227.

This sequence belongs to the DXR family. Mg(2+) serves as cofactor. Mn(2+) is required as a cofactor.

The enzyme catalyses 2-C-methyl-D-erythritol 4-phosphate + NADP(+) = 1-deoxy-D-xylulose 5-phosphate + NADPH + H(+). It functions in the pathway isoprenoid biosynthesis; isopentenyl diphosphate biosynthesis via DXP pathway; isopentenyl diphosphate from 1-deoxy-D-xylulose 5-phosphate: step 1/6. Catalyzes the NADPH-dependent rearrangement and reduction of 1-deoxy-D-xylulose-5-phosphate (DXP) to 2-C-methyl-D-erythritol 4-phosphate (MEP). The protein is 1-deoxy-D-xylulose 5-phosphate reductoisomerase of Xanthomonas euvesicatoria pv. vesicatoria (strain 85-10) (Xanthomonas campestris pv. vesicatoria).